Here is a 309-residue protein sequence, read N- to C-terminus: Ribonuclease Z (309 aa).

His63, His65, Asp67, His68, His145, Asp216, and His274 together coordinate Zn(2+). Catalysis depends on Asp67, which acts as the Proton acceptor.

Belongs to the RNase Z family. In terms of assembly, homodimer. Zn(2+) serves as cofactor.

The enzyme catalyses Endonucleolytic cleavage of RNA, removing extra 3' nucleotides from tRNA precursor, generating 3' termini of tRNAs. A 3'-hydroxy group is left at the tRNA terminus and a 5'-phosphoryl group is left at the trailer molecule.. Functionally, zinc phosphodiesterase, which displays some tRNA 3'-processing endonuclease activity. Probably involved in tRNA maturation, by removing a 3'-trailer from precursor tRNA. In Streptococcus equi subsp. equi (strain 4047), this protein is Ribonuclease Z.